Here is a 440-residue protein sequence, read N- to C-terminus: Protein disulfide-isomerase A6 (440 aa).

Positions 1 to 19 (MALLVLGLVSCTFFLAVNG) are cleaved as a signal peptide. Thioredoxin domains are found at residues 20–133 (LYSS…ALRQ) and 154–287 (SDSS…EDIA). Residues C55 and C58 each act as nucleophile in the active site. C55 and C58 form a disulfide bridge. S129 bears the Phosphoserine mark. Positions 141–161 (GRSGGYSSGKQGRSDSSSKKD) are disordered. A compositionally biased stretch (basic and acidic residues) spans 152–161 (GRSDSSSKKD). S156 is subject to Phosphoserine; by FAM20C. The residue at position 158 (S158) is a Phosphoserine. Catalysis depends on nucleophile residues C190 and C193. The cysteines at positions 190 and 193 are disulfide-linked. A Phosphoserine modification is found at S428. Residues 437 to 440 (KDEL) carry the Prevents secretion from ER motif.

Belongs to the protein disulfide isomerase family. Part of a large chaperone multiprotein complex comprising DNAJB11, HSP90B1, HSPA5, HYOU, PDIA2, PDIA4, PDIA6, PPIB, SDF2L1, UGGT1 and very small amounts of ERP29, but not, or at very low levels, CALR nor CANX. Interacts with MICA on the surface of tumor cells, leading to MICA disulfide bond reduction which is required for its release from tumor cells. Interacts with ITGB3 following platelet stimulation. Interacts with ERN1; the interaction is direct. Interacts with EIF2AK3. As to expression, expressed in platelets (at protein level).

The protein resides in the endoplasmic reticulum lumen. It is found in the cell membrane. Its subcellular location is the melanosome. It catalyses the reaction Catalyzes the rearrangement of -S-S- bonds in proteins.. May function as a chaperone that inhibits aggregation of misfolded proteins. Negatively regulates the unfolded protein response (UPR) through binding to UPR sensors such as ERN1, which in turn inactivates ERN1 signaling. May also regulate the UPR via the EIF2AK3 UPR sensor. Plays a role in platelet aggregation and activation by agonists such as convulxin, collagen and thrombin. The polypeptide is Protein disulfide-isomerase A6 (PDIA6) (Homo sapiens (Human)).